Consider the following 367-residue polypeptide: Regulator of fusion ref-1 (367 aa).

Residues 1–10 (MVLISTPPPA) are compositionally biased toward pro residues. The segment at 1–24 (MVLISTPPPAYAHNRKTSQEKKRR) is disordered. The segment at 11–24 (YAHNRKTSQEKKRR) is basic motif 1. In terms of domain architecture, bHLH 1 spans 11 to 63 (YAHNRKTSQEKKRRDEINAKIKELQLLIQNESDNEKMTQGDVLNRAVEVVSRM). A helix-loop-helix motif 1 region spans residues 25-63 (DEINAKIKELQLLIQNESDNEKMTQGDVLNRAVEVVSRM). 2 disordered regions span residues 133–177 (RSES…RRDR) and 313–367 (ATSP…RPWE). Low complexity predominate over residues 141 to 157 (SSMSYRSQSSSPSTSES). Residues 161 to 177 (IDRKEVKKNREQDRRDR) show a composition bias toward basic and acidic residues. Residues 162-175 (DRKEVKKNREQDRR) are basic motif 2. The bHLH 2 domain maps to 162 to 219 (DRKEVKKNREQDRRDRQGEAFDALKNFIIENKLMTSHQVEKMQRLNTLDIIIAYIQNK). Positions 176–219 (DRQGEAFDALKNFIIENKLMTSHQVEKMQRLNTLDIIIAYIQNK) are helix-loop-helix motif 2. A compositionally biased stretch (low complexity) spans 313–354 (ATSPKSQQSPSYSLDSPPPSSDTSSSSIETPSTPNENSNSNP). Positions 356–367 (ASRKSKLFRPWE) are enriched in basic residues.

As to quaternary structure, interacts with unc-37.

The protein localises to the nucleus. Functionally, probable transcription factor. Binds 5'-TGCCACGTGTCCA-3' in vitro, probably via the E-box motif 5'-CA[TC][AG]TG-3'. Acts in embryonic development in a Notch-dependent manner, perhaps as a direct target of transcriptional regulator lag-1 in the Notch signaling pathway. Also acts in embryonic development in a Notch-independent manner. Plays a role in both Notch-dependent and -independent pathways in the execution of neuronal lineage decisions in the embryo. Also involved in regulating cell fate leading to formation of neuronal structures known as postdeirids. Involved in the pattern of cell fusion with a large syncytium known as hyp-7, during larval development, in hermaphrodites. Plays a role in regulating the activity of homeobox protein mab-5 in Pn.p cells. In Caenorhabditis elegans, this protein is Regulator of fusion ref-1.